The sequence spans 497 residues: NAD(P)H-quinone oxidoreductase subunit 2, chloroplastic (497 aa).

14 helical membrane passes run 13–33 (VILPEIIVIVCLLIVLVLDLI), 37–57 (SAWLSTISLTGLVAATIALVF), 76–96 (FTISFRGIITISSALSILIST), 103–123 (GMGLAECLIFILTATVGGLFL), 129–149 (LVTVFVSLECLSLSSYLLVGY), 164–184 (LLMGGASSSIIAYGFSWLYGL), 206–226 (IAVWVALACVVVGIGFKLSAF), 240–260 (PTPVVAFFSVGSKAAALALAT), 274–294 (WHVLLELLALLSMIFGNLIAA), 311–331 (AGYLIIGIVCGNIYGYTGMIT), 332–352 (YMVTYIFMNLGAFGCVILFGL), 373–393 (AFCLSVCLLSLAGIPPLAGFF), 406–426 (GLYLLVYVALITSVISMYYYL), and 462–482 (VGIALCVFISTTLGFVINPII).

The protein belongs to the complex I subunit 2 family. NDH is composed of at least 16 different subunits, 5 of which are encoded in the nucleus.

The protein localises to the plastid. The protein resides in the chloroplast thylakoid membrane. It catalyses the reaction a plastoquinone + NADH + (n+1) H(+)(in) = a plastoquinol + NAD(+) + n H(+)(out). The catalysed reaction is a plastoquinone + NADPH + (n+1) H(+)(in) = a plastoquinol + NADP(+) + n H(+)(out). In terms of biological role, NDH shuttles electrons from NAD(P)H:plastoquinone, via FMN and iron-sulfur (Fe-S) centers, to quinones in the photosynthetic chain and possibly in a chloroplast respiratory chain. The immediate electron acceptor for the enzyme in this species is believed to be plastoquinone. Couples the redox reaction to proton translocation, and thus conserves the redox energy in a proton gradient. In Zygnema circumcarinatum (Green alga), this protein is NAD(P)H-quinone oxidoreductase subunit 2, chloroplastic.